The primary structure comprises 308 residues: Acyl transferase (308 aa).

Catalysis depends on charge relay system residues serine 116, aspartate 213, and histidine 243.

Belongs to the LuxD family.

The protein operates within lipid metabolism; fatty acid reduction for biolumincescence. In terms of biological role, acyl transferase is part of the fatty acid reductase system required for aldehyde biosynthesis; it produces fatty acids for the luminescent reaction. This chain is Acyl transferase, found in Shewanella hanedai (Alteromonas hanedai).